The sequence spans 514 residues: MEDHTVHQTEHMTTIEAHAVSQQVGQVHVATYTEHGMLSADEDSPSSPDDDAYDDSDILNSTGTDEVTAHLAAAGPVGMAAAAAVATGKKRKRPHIFESNPSIRKRQQTRLLRKLRATLDEYTTRVGQQAIVLCISPSKPNPVFRVFGAAPLENVVRKYKSMILEDLENALAEHAPPGGGELSSELPPLTIDGIPVSVDKMTQAQLRAFIPEMLKYSTGRGKPGWGKESCKPIWWPEDIPWANVRSDVRTEEQKQRVSWTQALRTIVKNCYKQHGREDLLYAFEDQVTTQVATTATHSIAHLVPSQTVVQTISNPDGTVSLIQVGTGATVATLADASELPGTVTVAQVNYSTVTDGEVEQNWATLQGGEMTIQTTQASEATQAVASLAEAAVAASQEMQTGATVTMALNRYSLEGALKFGEAAAHAVATLAEATLQGGGQIVLAGETAAAVGALTGVPDGSGLVQIPVSMYQTVVTSLAQGNRPVQVAMAPVTTRIDNTMTLDGQAVEVVTLEQ.

Positions 1–78 (MEDHTVHQTE…AHLAAAGPVG (78 aa)) are dimerization. The interval 38–61 (LSADEDSPSSPDDDAYDDSDILNS) is disordered. Positions 40-57 (ADEDSPSSPDDDAYDDSD) are enriched in acidic residues. Positions 88–116 (GKKRKRPHIFESNPSIRKRQQTRLLRKLR) match the Nuclear localization signal motif. A DNA-binding region spans residues 109–307 (TRLLRKLRAT…SIAHLVPSQT (199 aa)). Residues 303-488 (VPSQTVVQTI…AQGNRPVQVA (186 aa)) are required for transcriptional activation.

Belongs to the NRF1/Ewg family. As to quaternary structure, homodimer. Binds DNA as a dimer.

It is found in the nucleus. Its function is as follows. Probable transcription factor that is required for normal development of the outer retina. This chain is Nuclear respiratory factor 1 (nrf1), found in Danio rerio (Zebrafish).